A 280-amino-acid chain; its full sequence is Undecaprenyl-diphosphatase (280 aa).

The next 8 membrane-spanning stretches (helical) occupy residues 1–21 (MTILQAIVLAIVEGLTEFLPV), 41–61 (FVRAFTVMIQFGAILSVLVLY), 87–107 (FDLYWKLLIALVPAVILGFLF), 115–135 (LGSVWVVAVVLFLGGIFMLFV), 147–167 (ITYPKAFVIGLFQCLAIFLPG), 186–206 (KAAAEFSFFLAVPTMLGATLL), 226–246 (VLLVGNIVAFIVALAAIKFFI), and 260–280 (YRILVGGLLIVLMLSGVSLAV).

The protein belongs to the UppP family.

The protein localises to the cell inner membrane. The enzyme catalyses di-trans,octa-cis-undecaprenyl diphosphate + H2O = di-trans,octa-cis-undecaprenyl phosphate + phosphate + H(+). Functionally, catalyzes the dephosphorylation of undecaprenyl diphosphate (UPP). Confers resistance to bacitracin. The chain is Undecaprenyl-diphosphatase from Porphyromonas gingivalis (strain ATCC BAA-308 / W83).